The chain runs to 105 residues: MSIYVGNLSYEVTQEDISNVFAEYGSVKRVVLPTDRETGRLRGFAFVEMGSDAEETAAIEGLDGAEWMGRDLKVNKAKPKEDRGSFGGGNRGGYGGGGGGGRSRY.

The region spanning Ser2–Pro79 is the RRM domain. Residues Asn75–Gly84 show a composition bias toward basic and acidic residues. Positions Asn75–Tyr105 are disordered. Positions Ser85–Tyr105 are enriched in gly residues.

This chain is Putative RNA-binding protein RbpF (rbpF), found in Nostoc sp. (strain PCC 7120 / SAG 25.82 / UTEX 2576).